A 286-amino-acid polypeptide reads, in one-letter code: EIQRRFLTCGDPSLQCDYGVIMVYGVQFSTIELSSNERPKACSDTEAKNGPSNRCDGNEKCDVATSGSVCDLCNSAYLTNIFLDVTYGCLESKKVTTCEGVVHLECGDGVVFLQKALYGRIDSQTCSQGRPQSQLTNTKCSQEGTLALWSQRCDGKQTCEVNMRVNQISDPCVGTYKYLDVTYICLPAKTSITCEGSTSSLDCGKGVIKVFHANYGRRDGSTCSAGRHELSNQNCLQPKTLDVVKQWCEGKSQCTLGLDPVFGDPCFGTYKYLEVSYTCLGGSPTV.

2 SUEL-type lectin domains span residues 96 to 186 and 193 to 280; these read TTCE…YICL and TCEG…YTCL.

L-rhamnose binding lectin. Has hemagglutinating activity towards rabbit erythrocytes, but not human type B erythrocytes. Hemagglutinating activity is inhibited by smooth-type lipopolysaccharide (LPS) from K.pneumoniae, E.coli K-235, S.flexneri 1A, A.salmonicida and S.minnesota and rough-type LPS from S.flexneri, but not by rough-type LPS from E.coli K12 and E.coli EH100. Agglutinates E.coli K12 and B.subtilis. This is L-rhamnose-binding lectin CSL1 from Oncorhynchus keta (Chum salmon).